The following is a 202-amino-acid chain: Peptide methionine sulfoxide reductase B2, chloroplastic (202 aa).

The N-terminal 63 residues, 1-63 (MAFNIITPGR…RRGFHGGRIV (63 aa)), are a transit peptide targeting the chloroplast. The MsrB domain maps to 77–198 (EEEWRAILSP…NSISLKFTPE (122 aa)). Residues Cys-116, Cys-119, Cys-162, and Cys-165 each contribute to the Zn(2+) site. Cys-134 and Cys-187 are oxidised to a cystine. The active-site Nucleophile is the Cys-187.

This sequence belongs to the MsrB Met sulfoxide reductase family. Zn(2+) serves as cofactor. Expressed in stems, young leaves, floral buds and flowers. Expressed at low levels in roots, mature leaves and siliques (at protein level).

It localises to the plastid. Its subcellular location is the chloroplast. It carries out the reaction L-methionyl-[protein] + [thioredoxin]-disulfide + H2O = L-methionyl-(R)-S-oxide-[protein] + [thioredoxin]-dithiol. Functionally, catalyzes the reduction of methionine sulfoxide (MetSO) to methionine in proteins. Specifically reduces the MetSO R-enantiomer. Plays a protective role against oxidative stress by restoring activity to proteins that have been inactivated by methionine oxidation. May play an essential function in association with MSRB1 in maintaining vegetative growth during environmental constraints, through the preservation of photosynthetic antennae. MSRB1 and MSRB2 account for most of the leaf peptide MSR capacity. This Arabidopsis thaliana (Mouse-ear cress) protein is Peptide methionine sulfoxide reductase B2, chloroplastic.